A 140-amino-acid chain; its full sequence is L-fucose mutarotase (140 aa).

Catalysis depends on H22, which acts as the Proton donor. Substrate-binding positions include D30, R107, and 129–131 (YGN).

The protein belongs to the RbsD / FucU family. FucU mutarotase subfamily. As to quaternary structure, homodecamer.

It localises to the cytoplasm. It catalyses the reaction alpha-L-fucose = beta-L-fucose. Its pathway is carbohydrate metabolism; L-fucose metabolism. Its function is as follows. Involved in the anomeric conversion of L-fucose. The sequence is that of L-fucose mutarotase from Salmonella typhimurium (strain LT2 / SGSC1412 / ATCC 700720).